Here is a 421-residue protein sequence, read N- to C-terminus: MSLKERKSINECDLKGKKVLIRVDFNVPLDDGNITNDYRIRSALPAVQKVLTEGGSCVLMSHLGRPKGVSMAEGKELGSAGGIPGFEQKATLKPVAKALSELLSRPVTFAPDCLNAADVVSKMSPGDVVLLENVRFYKEEGSKKSTEEREAMAKILSSYGDVYISDAFGTAHRDSATMTGIPKILGNGAAGYLMEKEISYFAKVLGNPPRPLVAIVGGAKVSDKIQLLDNMLQRIDYLLIGGAMAYTFLKAQGYSIGISMCEESKLEFARSLLKKAEDRKVQIILPIDHVCHTEFKAVDSPLITEDQNIPEGHMALDIGPKTIEKYVQTIGKCKSAIWNGPMGVFEMVPYSKGTFAIAKAMGRGTHEHGLMSIIGGGDSASAAELSGEAKRMSHVSTGGGASLELLEGKTLPGVTVLDDKE.

(2R)-3-phosphoglycerate is bound by residues V23, D24, F25, N26, R39, S61, H62, G64, R65, R135, H172, and R173. Residues G218 and A219 each coordinate ADP. A CDP-binding site is contributed by G218. AMP-binding residues include A219 and K220. A219 serves as a coordination point for ATP. Residue A219 participates in Mg(2+) binding. K220 serves as a coordination point for (2R)-3-phosphoglycerate. D223 provides a ligand contact to CDP. Residue D223 coordinates Mg(2+). ADP is bound by residues K224 and G242. K224 provides a ligand contact to AMP. Residue K224 participates in ATP binding. CDP is bound at residue G242. Positions 243 and 315 each coordinate AMP. ATP contacts are provided by A243 and A315. Positions 315 and 339 each coordinate ADP. CDP-binding residues include G340 and F345. ADP is bound by residues F345, E346, D378, and S379. An AMP-binding site is contributed by E346. ATP contacts are provided by E346, D378, and S379. A Mg(2+)-binding site is contributed by D378.

The protein belongs to the phosphoglycerate kinase family. As to quaternary structure, monomer. Requires Mg(2+) as cofactor.

The protein resides in the cytoplasm. The enzyme catalyses (2R)-3-phosphoglycerate + ATP = (2R)-3-phospho-glyceroyl phosphate + ADP. Its pathway is carbohydrate degradation; glycolysis; pyruvate from D-glyceraldehyde 3-phosphate: step 2/5. The sequence is that of Phosphoglycerate kinase, cytosolic from Trypanosoma brucei brucei.